The primary structure comprises 365 residues: MIIATTEIQAINSFSRSESLSLKEVYGLIWLLVPIFTLILVIIIGVLVIVWLEREISAGIQQRIGPEYAGPLGILQALADGTKLLFKEDLLPSRGDISLFSLGPSIAVISTLLSYLVIPFGYHLVLADLSIGVFLWIAISSIAPIGLLMSGYGSNNKYSFSGGLRAAAQSISYEIPLTLCVLSISLLSNSSSTVDIVEAQSKYGFWGWNLWRQPIGFLVFLVSSLAECERLPFDLPEAEEELVAGYQTEYSGIKFGLFYVASYLNLLVSSLFVTVLYLGGWNLSIPYIFIPELFGKNKTGGIFGMTIGILITLAKAYLFLFISIATRWTLPRLRIDQLLNLGWKFLLPISLGNLLLTTSSQLVSL.

6 consecutive transmembrane segments (helical) span residues 29–49, 106–126, 129–149, 250–270, 302–322, and 338–358; these read IWLLVPIFTLILVIIIGVLVI, IAVISTLLSYLVIPFGYHLVL, LSIGVFLWIAISSIAPIGLLM, YSGIKFGLFYVASYLNLLVSS, IFGMTIGILITLAKAYLFLFI, and LLNLGWKFLLPISLGNLLLTT.

Belongs to the complex I subunit 1 family. As to quaternary structure, NDH is composed of at least 16 different subunits, 5 of which are encoded in the nucleus.

It is found in the plastid. Its subcellular location is the chloroplast thylakoid membrane. It catalyses the reaction a plastoquinone + NADH + (n+1) H(+)(in) = a plastoquinol + NAD(+) + n H(+)(out). It carries out the reaction a plastoquinone + NADPH + (n+1) H(+)(in) = a plastoquinol + NADP(+) + n H(+)(out). Its function is as follows. NDH shuttles electrons from NAD(P)H:plastoquinone, via FMN and iron-sulfur (Fe-S) centers, to quinones in the photosynthetic chain and possibly in a chloroplast respiratory chain. The immediate electron acceptor for the enzyme in this species is believed to be plastoquinone. Couples the redox reaction to proton translocation, and thus conserves the redox energy in a proton gradient. The chain is NAD(P)H-quinone oxidoreductase subunit 1, chloroplastic from Acorus calamus (Sweet flag).